A 245-amino-acid chain; its full sequence is 8-amino-3,8-dideoxy-manno-octulosonate cytidylyltransferase (245 aa).

This sequence belongs to the KdsB family.

It localises to the cytoplasm. The catalysed reaction is 8-amino-3,8-dideoxy-alpha-D-manno-octulosonate + CTP = CMP-8-amino-3,8-dideoxy-alpha-D-manno-oct-2-ulosonate + diphosphate. It participates in bacterial outer membrane biogenesis; lipopolysaccharide biosynthesis. In terms of biological role, activates KDO8N (a required 8-carbon sugar) for incorporation into bacterial lipopolysaccharide in the Shewanella genus. In Shewanella sp. (strain MR-7), this protein is 8-amino-3,8-dideoxy-manno-octulosonate cytidylyltransferase.